The primary structure comprises 206 residues: Translation initiation factor IF-3 (206 aa).

The protein belongs to the IF-3 family. Monomer.

It localises to the cytoplasm. Its function is as follows. IF-3 binds to the 30S ribosomal subunit and shifts the equilibrium between 70S ribosomes and their 50S and 30S subunits in favor of the free subunits, thus enhancing the availability of 30S subunits on which protein synthesis initiation begins. This is Translation initiation factor IF-3 from Chlorobium luteolum (strain DSM 273 / BCRC 81028 / 2530) (Pelodictyon luteolum).